The chain runs to 146 residues: Snaclec coagulation factor IX/factor X-binding protein subunit B (146 aa).

The first 23 residues, 1–23 (MGRFIFMSFGFLVVFLSLSGTAA), serve as a signal peptide directing secretion. Residues 24 to 146 (DCPSDWSSYE…MAQFVCEFQA (123 aa)) enclose the C-type lectin domain. Disulfide bonds link cysteine 25/cysteine 36, cysteine 53/cysteine 142, and cysteine 119/cysteine 134. Serine 64, glutamine 66, and glutamate 70 together coordinate Ca(2+). Glutamate 143 serves as a coordination point for Ca(2+).

It belongs to the snaclec family. In terms of assembly, heterodimer with subunit A of IX/X-bp or IX-bp; disulfide-linked. Expressed by the venom gland.

It is found in the secreted. Functionally, when linked to subunit A of IX/X-bp, anticoagulant protein which binds to the gamma-carboxyglutamic acid-domain regions of factors IX (F9) and factor X (10) in the presence of calcium with a 1 to 1 stoichiometry. Its function is as follows. When linked to subunit A of IX-bp, anticoagulant protein which binds to the gamma-carboxyglutamic acid-domain regions of factor IX (but not to factor X) in the presence of calcium with a 1 to 1 stoichiometry. The sequence is that of Snaclec coagulation factor IX/factor X-binding protein subunit B from Protobothrops flavoviridis (Habu).